A 273-amino-acid chain; its full sequence is MNNRVHQGHLARKRFGQNFLNDRFVIDSIVSAINPQKGQAMVEIGPGLAALTEPVGERLDKLTVIELDRDLAARLQTHPFLGSKLTIYQQDAMTMNFGELSAQLGQPLRVFGNLPYNISTPLMFHLFSYTDAIADMHFMLQKEVVNRLVAGPNSKAYGRLSVMAQYYCQVIPVLEVPPSAFTPPPKVDSAVVRLVPHATMPYPVKDIRVLSRITTEAFNQRRKTIRNSLGNLFSVETLTEMGIDPAMRAENISVAQYCQMANYLSENAPLKES.

Residues Asn-18, Leu-20, Gly-45, Glu-66, Asp-91, and Asn-113 each contribute to the S-adenosyl-L-methionine site.

Belongs to the class I-like SAM-binding methyltransferase superfamily. rRNA adenine N(6)-methyltransferase family. RsmA subfamily.

The protein localises to the cytoplasm. It carries out the reaction adenosine(1518)/adenosine(1519) in 16S rRNA + 4 S-adenosyl-L-methionine = N(6)-dimethyladenosine(1518)/N(6)-dimethyladenosine(1519) in 16S rRNA + 4 S-adenosyl-L-homocysteine + 4 H(+). Specifically dimethylates two adjacent adenosines (A1518 and A1519) in the loop of a conserved hairpin near the 3'-end of 16S rRNA in the 30S particle. May play a critical role in biogenesis of 30S subunits. In Salmonella choleraesuis (strain SC-B67), this protein is Ribosomal RNA small subunit methyltransferase A.